A 107-amino-acid chain; its full sequence is Phosphoribosyl-ATP pyrophosphatase (107 aa).

Belongs to the PRA-PH family.

The protein localises to the cytoplasm. The catalysed reaction is 1-(5-phospho-beta-D-ribosyl)-ATP + H2O = 1-(5-phospho-beta-D-ribosyl)-5'-AMP + diphosphate + H(+). Its pathway is amino-acid biosynthesis; L-histidine biosynthesis; L-histidine from 5-phospho-alpha-D-ribose 1-diphosphate: step 2/9. This is Phosphoribosyl-ATP pyrophosphatase from Azoarcus sp. (strain BH72).